The sequence spans 164 residues: Cell division protein SepF (164 aa).

The tract at residues 21–71 (YQQGQQPAQQQQSPVQAVPTPVPAPQQQAKRAPVTPLHKPSTTTRNAAPAE) is disordered. The span at 22–49 (QQGQQPAQQQQSPVQAVPTPVPAPQQQA) shows a compositional bias: low complexity.

The protein belongs to the SepF family. Homodimer. Interacts with FtsZ.

The protein localises to the cytoplasm. Its function is as follows. Cell division protein that is part of the divisome complex and is recruited early to the Z-ring. Probably stimulates Z-ring formation, perhaps through the cross-linking of FtsZ protofilaments. Its function overlaps with FtsA. In Clavibacter sepedonicus (Clavibacter michiganensis subsp. sepedonicus), this protein is Cell division protein SepF.